Here is an 81-residue protein sequence, read N- to C-terminus: uncharacterized protein (81 aa).

This is an uncharacterized protein from Escherichia coli (strain K12).